A 204-amino-acid chain; its full sequence is N-(5'-phosphoribosyl)anthranilate isomerase (204 aa).

The protein belongs to the TrpF family.

The catalysed reaction is N-(5-phospho-beta-D-ribosyl)anthranilate = 1-(2-carboxyphenylamino)-1-deoxy-D-ribulose 5-phosphate. The protein operates within amino-acid biosynthesis; L-tryptophan biosynthesis; L-tryptophan from chorismate: step 3/5. The polypeptide is N-(5'-phosphoribosyl)anthranilate isomerase (Bacillus cereus (strain AH187)).